Here is a 195-residue protein sequence, read N- to C-terminus: Probable GTP-binding protein EngB (195 aa).

In terms of domain architecture, EngB-type G spans 24-195 (GLSEVGLSGR…QIWNVIEKYL (172 aa)). GTP contacts are provided by residues 32-39 (GRSNVGKS), 59-63 (GKTQT), 77-80 (DVPG), 144-147 (TKED), and 176-178 (YSS). Positions 39 and 61 each coordinate Mg(2+).

The protein belongs to the TRAFAC class TrmE-Era-EngA-EngB-Septin-like GTPase superfamily. EngB GTPase family. The cofactor is Mg(2+).

Necessary for normal cell division and for the maintenance of normal septation. In Staphylococcus saprophyticus subsp. saprophyticus (strain ATCC 15305 / DSM 20229 / NCIMB 8711 / NCTC 7292 / S-41), this protein is Probable GTP-binding protein EngB.